The sequence spans 273 residues: Shikimate dehydrogenase (NADP(+)) (273 aa).

Residues 15–17 (SKS) and Thr-62 contribute to the shikimate site. Residue Lys-66 is the Proton acceptor of the active site. Asp-78 contributes to the NADP(+) binding site. The shikimate site is built by Asn-87 and Asp-103. Residues 127–131 (GAGGA), 150–155 (NRTYAR), and Met-214 contribute to the NADP(+) site. Tyr-216 provides a ligand contact to shikimate. An NADP(+)-binding site is contributed by Gly-238.

This sequence belongs to the shikimate dehydrogenase family. Homodimer.

It carries out the reaction shikimate + NADP(+) = 3-dehydroshikimate + NADPH + H(+). Its pathway is metabolic intermediate biosynthesis; chorismate biosynthesis; chorismate from D-erythrose 4-phosphate and phosphoenolpyruvate: step 4/7. In terms of biological role, involved in the biosynthesis of the chorismate, which leads to the biosynthesis of aromatic amino acids. Catalyzes the reversible NADPH linked reduction of 3-dehydroshikimate (DHSA) to yield shikimate (SA). This chain is Shikimate dehydrogenase (NADP(+)), found in Yersinia enterocolitica serotype O:8 / biotype 1B (strain NCTC 13174 / 8081).